Here is a 112-residue protein sequence, read N- to C-terminus: 2Fe-2S ferredoxin (112 aa).

A 2Fe-2S ferredoxin-type domain is found at 5–107 (IKVTFIINDG…GIKVRIPATT (103 aa)). [2Fe-2S] cluster is bound by residues C42, C48, C51, and C88.

The protein belongs to the adrenodoxin/putidaredoxin family. [2Fe-2S] cluster is required as a cofactor.

In terms of biological role, ferredoxin are iron-sulfur proteins that transfer electrons in a wide variety of metabolic reactions. The chain is 2Fe-2S ferredoxin (fdxB) from Rickettsia conorii (strain ATCC VR-613 / Malish 7).